Here is a 938-residue protein sequence, read N- to C-terminus: Isoleucine--tRNA ligase (938 aa).

The short motif at 58-68 is the 'HIGH' region element; that stretch reads PYANGNIHIGH. Glu-562 contributes to the L-isoleucyl-5'-AMP binding site. Residues 603-607 carry the 'KMSKS' region motif; sequence KMSKS. Residue Lys-606 coordinates ATP. Zn(2+) is bound by residues Cys-901, Cys-904, Cys-921, and Cys-924.

The protein belongs to the class-I aminoacyl-tRNA synthetase family. IleS type 1 subfamily. As to quaternary structure, monomer. Zn(2+) is required as a cofactor.

Its subcellular location is the cytoplasm. The catalysed reaction is tRNA(Ile) + L-isoleucine + ATP = L-isoleucyl-tRNA(Ile) + AMP + diphosphate. Catalyzes the attachment of isoleucine to tRNA(Ile). As IleRS can inadvertently accommodate and process structurally similar amino acids such as valine, to avoid such errors it has two additional distinct tRNA(Ile)-dependent editing activities. One activity is designated as 'pretransfer' editing and involves the hydrolysis of activated Val-AMP. The other activity is designated 'posttransfer' editing and involves deacylation of mischarged Val-tRNA(Ile). This chain is Isoleucine--tRNA ligase, found in Actinobacillus pleuropneumoniae serotype 7 (strain AP76).